A 630-amino-acid chain; its full sequence is Ankyrin repeat protein OPG025 (630 aa).

ANK repeat units lie at residues 36-69 (DGETPLKAYVTKKNNNIKNDVVILLLSSVDYKNI), 70-100 (NDFDIFEYLCSDNIDIDLLKLLISKGIEINS), 103-134 (NGINIVEKYATTSNPNIDVFKLLLDKGIPTCS), 174-210 (MGKTVLYYYIITRSQDGYVTSLDVINYLISHENEMCH), 338-367 (KHINKYFKRFDNRDPKVVEYILKNGNVVVN), and 408-437 (HGRSILYYCIESHSVALIEWLIDNGADINI).

Belongs to the orthopoxvirus OPG025 family. In terms of assembly, interacts with components of host SCF complex CUL1 and SKP1 and components of the cullin deneddylation/COP9 signalosome complex subunits COPS7A and COPS7B.

Functionally, plays a role in the inhibition of host immune repsonse by counteracting the action of interferons on early events in the viral replication cycle. This is Ankyrin repeat protein OPG025 (OPG025) from Monkeypox virus.